The sequence spans 193 residues: Thioredoxin peroxidase (193 aa).

The 159-residue stretch at 3–161 folds into the Thioredoxin domain; it reads AVVGKLAPSF…ALRLLDAFQF (159 aa). C48 functions as the Cysteine sulfenic acid (-SOH) intermediate in the catalytic mechanism.

Belongs to the peroxiredoxin family. AhpC/Prx1 subfamily. As to quaternary structure, homodimer; disulfide-linked, upon oxidation.

It catalyses the reaction a hydroperoxide + [thioredoxin]-dithiol = an alcohol + [thioredoxin]-disulfide + H2O. In terms of biological role, thiol-specific peroxidase that catalyzes the reduction of hydrogen peroxide and organic hydroperoxides to water and alcohols, respectively. Plays a role in cell protection against oxidative stress by detoxifying peroxides and as sensor of hydrogen peroxide-mediated signaling events. The chain is Thioredoxin peroxidase (TPX) from Echinococcus granulosus (Hydatid tapeworm).